The sequence spans 101 residues: Small ribosomal subunit protein uS17 (101 aa).

It belongs to the universal ribosomal protein uS17 family. Part of the 30S ribosomal subunit.

One of the primary rRNA binding proteins, it binds specifically to the 5'-end of 16S ribosomal RNA. This is Small ribosomal subunit protein uS17 from Kosmotoga olearia (strain ATCC BAA-1733 / DSM 21960 / TBF 19.5.1).